Consider the following 1196-residue polypeptide: DNA-directed RNA polymerase subunit beta (1196 aa).

Residues 1152–1165 are compositionally biased toward acidic residues; the sequence is EEEIEMRDLEDEED. A disordered region spans residues 1152–1196; sequence EEEIEMRDLEDEEDAKQADGLALSGDEAPEETASPDVERDAVTKE. A compositionally biased stretch (basic and acidic residues) spans 1187–1196; that stretch reads DVERDAVTKE.

It belongs to the RNA polymerase beta chain family. In terms of assembly, the RNAP catalytic core consists of 2 alpha, 1 beta, 1 beta' and 1 omega subunit. When a sigma factor is associated with the core the holoenzyme is formed, which can initiate transcription.

It catalyses the reaction RNA(n) + a ribonucleoside 5'-triphosphate = RNA(n+1) + diphosphate. In terms of biological role, DNA-dependent RNA polymerase catalyzes the transcription of DNA into RNA using the four ribonucleoside triphosphates as substrates. The sequence is that of DNA-directed RNA polymerase subunit beta from Bacillus velezensis (strain DSM 23117 / BGSC 10A6 / LMG 26770 / FZB42) (Bacillus amyloliquefaciens subsp. plantarum).